The primary structure comprises 296 residues: 4-hydroxybenzoate octaprenyltransferase (296 aa).

8 consecutive transmembrane segments (helical) span residues 28 to 48, 52 to 72, 102 to 122, 145 to 167, 174 to 196, 219 to 239, 241 to 261, and 275 to 295; these read PIGI…AGNG, LANV…GCCI, ALTL…CTNS, TYYP…FTAA, GAWL…YAMV, SIIL…GSRF, LGGW…WEYW, and FLHN…DYAL.

Belongs to the UbiA prenyltransferase family. Requires Mg(2+) as cofactor.

The protein localises to the cell inner membrane. It carries out the reaction all-trans-octaprenyl diphosphate + 4-hydroxybenzoate = 4-hydroxy-3-(all-trans-octaprenyl)benzoate + diphosphate. Its pathway is cofactor biosynthesis; ubiquinone biosynthesis. Catalyzes the prenylation of para-hydroxybenzoate (PHB) with an all-trans polyprenyl group. Mediates the second step in the final reaction sequence of ubiquinone-8 (UQ-8) biosynthesis, which is the condensation of the polyisoprenoid side chain with PHB, generating the first membrane-bound Q intermediate 3-octaprenyl-4-hydroxybenzoate. The polypeptide is 4-hydroxybenzoate octaprenyltransferase (Pseudomonas putida (strain ATCC 700007 / DSM 6899 / JCM 31910 / BCRC 17059 / LMG 24140 / F1)).